A 692-amino-acid chain; its full sequence is UvrABC system protein B (692 aa).

Residues 32 to 187 (ENIENGEKAQ…LLNDLVGIQF (156 aa)) enclose the Helicase ATP-binding domain. 45-52 (GATGTGKT) is a binding site for ATP. The short motif at 98–121 (YYDYYQPEAYVPSSDTYIEKDSSV) is the Beta-hairpin element. The region spanning 436 to 631 (QIDDLVGEIH…TIKKEIRDLI (196 aa)) is the Helicase C-terminal domain. A UVR domain is found at 656–691 (KALVKKLEKEMQQAAAALDFEGAAQLRDMVLELRAM).

It belongs to the UvrB family. As to quaternary structure, forms a heterotetramer with UvrA during the search for lesions. Interacts with UvrC in an incision complex.

The protein resides in the cytoplasm. The UvrABC repair system catalyzes the recognition and processing of DNA lesions. A damage recognition complex composed of 2 UvrA and 2 UvrB subunits scans DNA for abnormalities. Upon binding of the UvrA(2)B(2) complex to a putative damaged site, the DNA wraps around one UvrB monomer. DNA wrap is dependent on ATP binding by UvrB and probably causes local melting of the DNA helix, facilitating insertion of UvrB beta-hairpin between the DNA strands. Then UvrB probes one DNA strand for the presence of a lesion. If a lesion is found the UvrA subunits dissociate and the UvrB-DNA preincision complex is formed. This complex is subsequently bound by UvrC and the second UvrB is released. If no lesion is found, the DNA wraps around the other UvrB subunit that will check the other stand for damage. The protein is UvrABC system protein B of Lactococcus lactis subsp. cremoris (strain SK11).